A 689-amino-acid chain; its full sequence is MTQQTFLVEIGTEELPPKALRSLAEAFAANFAAELDNANLAYGEISWFATPRRLALKVANLDEAQADREVEKRGPAIAQAFDTEGKPTKAAEGWARGCGITAAQAERLVTDKGEWLLYRALVKGRSVKELLAAMVNSALNKLPIPKLMRWSDKETQFARPVHTVTMLFGDELIEGEILGIKSARVIRGHRFMGESEFAIDNAEQYPEILQQRGRVLADYTTRKVLIKQDVEQAAIKLGGVADISDSLLEEVTSLVEWPVVLTAKFEEKFLEVPAEALVYTMKGDQKYFPVYDNAGKLMANFIFVANIDSSDPQQIIDGNEKVVRPRLADAEFFFKTDRKQRLEDNLPRLETVLFQKQLGTLRDKTDRIQALAGWIAEKIGADVNHATRAGLLSKCDLMTNMVFEFTDTQGVMGMHYARHDGEAEDVALALNEQYQPRFAGDELPSTGVSCALAIADKMDTLAGIFGIGQHPRGDKDPFALRRAALGALRIIVEKKLPLDLQTLTEEAVRLYGDKLTNAKVTDDVVEFMLGRFRAWYQEQGYRVDTIQAVLARRPTQPADFDARVKAVTHFRTLDEAAALAAANKRVSNILAKSEETLNEKVDVSTLKAPEEVKLATHLIVLQDKLAPLFAEGHYQEALVELASLREVVDAFFDNVMVMDEDLQVRVNRLTLLSELRDLFLRVADISLLQ.

This sequence belongs to the class-II aminoacyl-tRNA synthetase family. Tetramer of two alpha and two beta subunits.

The protein localises to the cytoplasm. It carries out the reaction tRNA(Gly) + glycine + ATP = glycyl-tRNA(Gly) + AMP + diphosphate. The chain is Glycine--tRNA ligase beta subunit from Photorhabdus laumondii subsp. laumondii (strain DSM 15139 / CIP 105565 / TT01) (Photorhabdus luminescens subsp. laumondii).